Reading from the N-terminus, the 817-residue chain is Probable inorganic carbon transporter subunit DabA (817 aa).

Residues cysteine 301, aspartate 303, histidine 491, and cysteine 506 each contribute to the Zn(2+) site. Disordered regions lie at residues 598–617 and 794–817; these read NTSVDEGRPAAAVRETERRA and GWHARPAPDASTATKAPASAGVPS.

This sequence belongs to the inorganic carbon transporter (TC 9.A.2) DabA family. As to quaternary structure, forms a complex with DabB. The cofactor is Zn(2+).

Its subcellular location is the cell inner membrane. In terms of biological role, part of an energy-coupled inorganic carbon pump. The chain is Probable inorganic carbon transporter subunit DabA from Salinibacter ruber (strain DSM 13855 / M31).